An 812-amino-acid polypeptide reads, in one-letter code: ATP-dependent DNA helicase PIF3 (812 aa).

247 to 254 serves as a coordination point for ATP; sequence GSAGTGKT. Residues 741-761 mediate DNA binding; it reads HLVYVACSRVRSMDQLIVRNV.

Belongs to the helicase family. PIF1 subfamily. As to quaternary structure, monomer. Mg(2+) is required as a cofactor.

The protein resides in the cytoplasm. It catalyses the reaction Couples ATP hydrolysis with the unwinding of duplex DNA at the replication fork by translocating in the 5'-3' direction. This creates two antiparallel DNA single strands (ssDNA). The leading ssDNA polymer is the template for DNA polymerase III holoenzyme which synthesizes a continuous strand.. The enzyme catalyses ATP + H2O = ADP + phosphate + H(+). DNA-dependent ATPase and 5'-3' DNA helicase required for the maintenance of genome stability. This Trypanosoma brucei brucei (strain 927/4 GUTat10.1) protein is ATP-dependent DNA helicase PIF3.